Here is a 388-residue protein sequence, read N- to C-terminus: Formate-dependent phosphoribosylglycinamide formyltransferase (388 aa).

Residues 11–12 and Glu-71 contribute to the N(1)-(5-phospho-beta-D-ribosyl)glycinamide site; that span reads EL. Residues Arg-103, Lys-144, 149-154, 184-187, and Glu-192 each bind ATP; these read SSGKGQ and EEFI. An ATP-grasp domain is found at 108-300; sequence DLAAKELGLK…EFELHLRAVL (193 aa). Mg(2+) is bound by residues Glu-257 and Glu-270. N(1)-(5-phospho-beta-D-ribosyl)glycinamide is bound by residues Asp-277, Lys-349, and 356-357; that span reads RR.

Belongs to the PurK/PurT family. In terms of assembly, homodimer.

It carries out the reaction N(1)-(5-phospho-beta-D-ribosyl)glycinamide + formate + ATP = N(2)-formyl-N(1)-(5-phospho-beta-D-ribosyl)glycinamide + ADP + phosphate + H(+). It functions in the pathway purine metabolism; IMP biosynthesis via de novo pathway; N(2)-formyl-N(1)-(5-phospho-D-ribosyl)glycinamide from N(1)-(5-phospho-D-ribosyl)glycinamide (formate route): step 1/1. Functionally, involved in the de novo purine biosynthesis. Catalyzes the transfer of formate to 5-phospho-ribosyl-glycinamide (GAR), producing 5-phospho-ribosyl-N-formylglycinamide (FGAR). Formate is provided by PurU via hydrolysis of 10-formyl-tetrahydrofolate. The chain is Formate-dependent phosphoribosylglycinamide formyltransferase from Bacteroides thetaiotaomicron (strain ATCC 29148 / DSM 2079 / JCM 5827 / CCUG 10774 / NCTC 10582 / VPI-5482 / E50).